A 431-amino-acid chain; its full sequence is Adenylosuccinate synthetase (431 aa).

GTP-binding positions include 12 to 18 (GDEGKGK) and 40 to 42 (GHT). Aspartate 13 serves as the catalytic Proton acceptor. Aspartate 13 and glycine 40 together coordinate Mg(2+). IMP is bound by residues 13-16 (DEGK), 38-41 (NAGH), threonine 128, arginine 142, glutamine 223, threonine 238, and arginine 301. The active-site Proton donor is histidine 41. 297–303 (TVTGRPR) lines the substrate pocket. GTP-binding positions include arginine 303, 329 to 331 (SID), and 411 to 413 (SVG).

Belongs to the adenylosuccinate synthetase family. In terms of assembly, homodimer. Mg(2+) is required as a cofactor.

The protein resides in the cytoplasm. The catalysed reaction is IMP + L-aspartate + GTP = N(6)-(1,2-dicarboxyethyl)-AMP + GDP + phosphate + 2 H(+). It functions in the pathway purine metabolism; AMP biosynthesis via de novo pathway; AMP from IMP: step 1/2. Functionally, plays an important role in the de novo pathway of purine nucleotide biosynthesis. Catalyzes the first committed step in the biosynthesis of AMP from IMP. This is Adenylosuccinate synthetase from Lacticaseibacillus paracasei (strain ATCC 334 / BCRC 17002 / CCUG 31169 / CIP 107868 / KCTC 3260 / NRRL B-441) (Lactobacillus paracasei).